The sequence spans 327 residues: Malate dehydrogenase (327 aa).

Residues 20 to 25 and aspartate 44 contribute to the NAD(+) site; that span reads GAGRVG. Arginine 93 and arginine 99 together coordinate substrate. Residues asparagine 106 and 129–131 each bind NAD(+); that span reads VTN. Substrate contacts are provided by asparagine 131 and arginine 162. The active-site Proton acceptor is the histidine 186.

The protein belongs to the LDH/MDH superfamily. MDH type 3 family.

The catalysed reaction is (S)-malate + NAD(+) = oxaloacetate + NADH + H(+). Functionally, catalyzes the reversible oxidation of malate to oxaloacetate. The polypeptide is Malate dehydrogenase (Nostoc punctiforme (strain ATCC 29133 / PCC 73102)).